Consider the following 256-residue polypeptide: Imidazole glycerol phosphate synthase subunit HisF (256 aa).

Active-site residues include Asp12 and Asp131.

Belongs to the HisA/HisF family. In terms of assembly, heterodimer of HisH and HisF.

The protein resides in the cytoplasm. The enzyme catalyses 5-[(5-phospho-1-deoxy-D-ribulos-1-ylimino)methylamino]-1-(5-phospho-beta-D-ribosyl)imidazole-4-carboxamide + L-glutamine = D-erythro-1-(imidazol-4-yl)glycerol 3-phosphate + 5-amino-1-(5-phospho-beta-D-ribosyl)imidazole-4-carboxamide + L-glutamate + H(+). The protein operates within amino-acid biosynthesis; L-histidine biosynthesis; L-histidine from 5-phospho-alpha-D-ribose 1-diphosphate: step 5/9. Functionally, IGPS catalyzes the conversion of PRFAR and glutamine to IGP, AICAR and glutamate. The HisF subunit catalyzes the cyclization activity that produces IGP and AICAR from PRFAR using the ammonia provided by the HisH subunit. The chain is Imidazole glycerol phosphate synthase subunit HisF from Bifidobacterium longum (strain DJO10A).